A 256-amino-acid chain; its full sequence is Thiazole synthase (256 aa).

The active-site Schiff-base intermediate with DXP is K95. Residues G156, 182-183 (AG), and 204-205 (NT) each bind 1-deoxy-D-xylulose 5-phosphate.

The protein belongs to the ThiG family. As to quaternary structure, homotetramer. Forms heterodimers with either ThiH or ThiS.

The protein resides in the cytoplasm. It catalyses the reaction [ThiS sulfur-carrier protein]-C-terminal-Gly-aminoethanethioate + 2-iminoacetate + 1-deoxy-D-xylulose 5-phosphate = [ThiS sulfur-carrier protein]-C-terminal Gly-Gly + 2-[(2R,5Z)-2-carboxy-4-methylthiazol-5(2H)-ylidene]ethyl phosphate + 2 H2O + H(+). It functions in the pathway cofactor biosynthesis; thiamine diphosphate biosynthesis. Its function is as follows. Catalyzes the rearrangement of 1-deoxy-D-xylulose 5-phosphate (DXP) to produce the thiazole phosphate moiety of thiamine. Sulfur is provided by the thiocarboxylate moiety of the carrier protein ThiS. In vitro, sulfur can be provided by H(2)S. The protein is Thiazole synthase of Enterobacter sp. (strain 638).